A 44-amino-acid chain; its full sequence is U9-ctenitoxin-Co1a (44 aa).

Intrachain disulfides connect Cys3/Cys17, Cys10/Cys23, Cys16/Cys33, and Cys25/Cys31.

Expressed by the venom gland.

It is found in the secreted. Functionally, insecticidal neurotoxin that reversibly inhibits the N-methyl-D-aspartate (NMDA)-subtype of ionotropic glutamate receptor (GRIN) and inhibits inactivation of insect sodium channels (Nav). In vivo, is highly toxic to insects. This Ctenus ornatus (Brazilian spider) protein is U9-ctenitoxin-Co1a.